Consider the following 1710-residue polypeptide: Ankyrin repeat domain-containing protein 26 (1710 aa).

Positions 1-41 (MKKIFSKKGESPLGSFARRQRSSAGGGGEPGEGAYSQPGYH) are disordered. Phosphoserine occurs at positions 11 and 15. 5 ANK repeats span residues 45 to 75 (RDLG…GLND), 79 to 108 (MNRT…QLNV), 112 to 141 (ENRT…DPNL), 145 to 174 (HGNT…NIEA), and 178 to 207 (DDLT…NVNA). Residues 222-274 (KEERIPKHSSQNSNSVDESSEDSLSRLSGKPGVDDSWPTSDDEDLNFDTKNVP) form a disordered region. Residues Ser241, Ser261, Ser489, and Ser530 each carry the phosphoserine modification. Residues 504–630 (DSVPNKAGGM…EKRTSKESVN (127 aa)) form a disordered region. The stretch at 529–566 (ASEEEQEREGSENNQPQVEEERKKHRNNEMEVSANIHD) forms a coiled coil. A compositionally biased stretch (acidic residues) spans 569 to 580 (TDDAEDDDDDDG). 2 stretches are compositionally biased toward basic and acidic residues: residues 586–602 (KSGE…ENKE) and 613–626 (KEVK…RTSK). Ser631 carries the post-translational modification Phosphoserine. The span at 650-660 (DSSLSEIDEDE) shows a compositional bias: acidic residues. Positions 650-698 (DSSLSEIDEDEGRPTKKTSNEKNKVKNQIQSMDDVDDLTQSSETASEDC) are disordered. The span at 661–673 (GRPTKKTSNEKNK) shows a compositional bias: basic and acidic residues. 4 coiled-coil regions span residues 743 to 873 (KNHC…NARM), 905 to 1472 (EEEK…MVEL), 1517 to 1587 (NNFA…NTKL), and 1649 to 1674 (LSKM…LESG). Residues 892 to 912 (AQKKMNSENSHSHEEEKDLSH) are disordered.

As to quaternary structure, interacts with TRIO. Interacts with GPS2. Interacts with CCDC85B. Interacts with HMMR.

Its function is as follows. Acts as a regulator of adipogenesis. Involved in the regulation of the feeding behavior. The chain is Ankyrin repeat domain-containing protein 26 from Homo sapiens (Human).